Here is a 267-residue protein sequence, read N- to C-terminus: 3-methyl-2-oxobutanoate hydroxymethyltransferase (267 aa).

2 residues coordinate Mg(2+): Asp46 and Asp85. 3-methyl-2-oxobutanoate-binding positions include 46-47 (DS), Asp85, and Lys115. Residue Glu117 participates in Mg(2+) binding. Glu184 acts as the Proton acceptor in catalysis.

This sequence belongs to the PanB family. Homodecamer; pentamer of dimers. The cofactor is Mg(2+).

Its subcellular location is the cytoplasm. The catalysed reaction is 3-methyl-2-oxobutanoate + (6R)-5,10-methylene-5,6,7,8-tetrahydrofolate + H2O = 2-dehydropantoate + (6S)-5,6,7,8-tetrahydrofolate. It participates in cofactor biosynthesis; (R)-pantothenate biosynthesis; (R)-pantoate from 3-methyl-2-oxobutanoate: step 1/2. Functionally, catalyzes the reversible reaction in which hydroxymethyl group from 5,10-methylenetetrahydrofolate is transferred onto alpha-ketoisovalerate to form ketopantoate. In Geotalea uraniireducens (strain Rf4) (Geobacter uraniireducens), this protein is 3-methyl-2-oxobutanoate hydroxymethyltransferase.